A 355-amino-acid polypeptide reads, in one-letter code: C-C chemokine receptor type 3 (355 aa).

The Extracellular segment spans residues 1–34 (MTTSLDTVETFGPTSYDDDMGLLCEKADVGALIA). Residues 35–62 (QFVPPLYSLVFMVGLLGNVVVVMILIKY) form a helical membrane-spanning segment. Topologically, residues 63 to 72 (RRLRIMTNIY) are cytoplasmic. The chain crosses the membrane as a helical span at residues 73–93 (LLNLAISDLLFLFTLPFWIHY). Residues 94–107 (VRERNWVFSHGMCK) lie on the Extracellular side of the membrane. A disulfide bond links cysteine 106 and cysteine 183. A helical transmembrane segment spans residues 108-129 (VLSGFYHTGLYSEIFFIILLTI). Residues 130–146 (DRYLAIVHAVFALRART) lie on the Cytoplasmic side of the membrane. Residues 147–171 (VTFGVITSIVTWGLAVLAALPEFIF) traverse the membrane as a helical segment. The Extracellular segment spans residues 172 to 203 (YGTEKLFPKTLCSAIYPQDTVYSWRHFHTLKM). A helical membrane pass occupies residues 204-223 (TILCLALPLLVMAICYTGII). Residues 224–239 (KTLLRCPSKKKYKAIR) are Cytoplasmic-facing. The helical transmembrane segment at 240-264 (LIFVIMAVFFIFWTPYNVAILISTY) threads the bilayer. Residues 265 to 281 (QSVLFGLDCERSKHLDL) are Extracellular-facing. The helical transmembrane segment at 282-305 (FVLATEVIAYSHCCVNPVIYAFVG) threads the bilayer. At 306–355 (ERFRKYLRHFFHRHVLMHLGKYIPFLPSEKLERTSSVSPSTAEPELSIVF) the chain is on the cytoplasmic side.

Belongs to the G-protein coupled receptor 1 family.

Its subcellular location is the cell membrane. In terms of biological role, receptor for C-C type chemokine. Binds and responds to a variety of chemokines, including CCL11, CCL26, CCL7, CCL13, RANTES(CCL5) and CCL15. Subsequently transduces a signal by increasing the intracellular calcium ions level. In addition acts as a possible functional receptor for NARS1. The chain is C-C chemokine receptor type 3 (CCR3) from Macaca mulatta (Rhesus macaque).